The primary structure comprises 126 residues: Holo-[acyl-carrier-protein] synthase (126 aa).

Mg(2+) contacts are provided by Asp-9 and Glu-58.

It belongs to the P-Pant transferase superfamily. AcpS family. It depends on Mg(2+) as a cofactor.

It is found in the cytoplasm. The enzyme catalyses apo-[ACP] + CoA = holo-[ACP] + adenosine 3',5'-bisphosphate + H(+). In terms of biological role, transfers the 4'-phosphopantetheine moiety from coenzyme A to a Ser of acyl-carrier-protein. The sequence is that of Holo-[acyl-carrier-protein] synthase from Escherichia coli (strain K12 / MC4100 / BW2952).